We begin with the raw amino-acid sequence, 193 residues long: Interleukin-18 (193 aa).

Positions 1–36 (MAAEQVEDNCISFVEMKFINNTLYFVAENDEDLESD) are excised as a propeptide.

It belongs to the IL-1 family. Forms a ternary complex with ligand-binding receptor subunit IL18R1 and signaling receptor subunit IL18RAP at the plasma membrane. Mature IL18 first binds to IL18R1 forming a low affinity binary complex, which then interacts with IL18RAP to form a high affinity ternary complex that signals inside the cell. Interacts with cargo receptor TMED10; the interaction mediates the translocation from the cytoplasm into the ERGIC (endoplasmic reticulum-Golgi intermediate compartment) and thereby secretion. In terms of processing, the pro-IL-18 precursor is processed by CASP1, CASP4 or CASP5 to yield its mature, active form. The pro-IL-18 precursor features autoinhibitory interactions between the propeptide and the post-cleavage-site region, preventing recognition by the IL18R1 receptor. Processing by CASP1, CASP4 or CASP5 induces conformational changes to generate critical receptor-binding sites. The mature form is then secreted and released in the extracellular milieu by passing through the gasdermin-D (GSDMD) pore. In contrast, cleavage by CASP3 inactivates IL18.

Its subcellular location is the cytoplasm. It localises to the cytosol. It is found in the secreted. Functionally, pro-inflammatory cytokine primarily involved in epithelial barrier repair, polarized T-helper 1 (Th1) cell and natural killer (NK) cell immune responses. Upon binding to IL18R1 and IL18RAP, forms a signaling ternary complex which activates NF-kappa-B, triggering synthesis of inflammatory mediators. Synergizes with IL12/interleukin-12 to induce IFNG synthesis from T-helper 1 (Th1) cells and natural killer (NK) cells. Involved in transduction of inflammation downstream of pyroptosis: its mature form is specifically released in the extracellular milieu by passing through the gasdermin-D (GSDMD) pore. The protein is Interleukin-18 (IL18) of Boselaphus tragocamelus (Nilgai).